The chain runs to 535 residues: Cytochrome c oxidase subunit 1 (535 aa).

The helical transmembrane segment at 15–37 (IAILYFIFSTFCGLAGTAMSFII) threads the bilayer. Ca(2+)-binding residues include Glu-40, Ala-43, and Gly-45. The next 5 helical transmembrane spans lie at 58–80 (VLVT…IGGF), 147–169 (LAIF…FIVT), 190–212 (ILIT…TMLL), 238–260 (WFFG…SHIV), and 267–289 (PVFG…FLVW). His-63 serves as a coordination point for Fe(II)-heme a. His-242 provides a ligand contact to Cu cation. A cross-link (1'-histidyl-3'-tyrosine (His-Tyr)) is located at residues 242-246 (HPEVY). Tyr-246 contacts O2. The Cu cation site is built by His-291 and His-292. 2 helical membrane-spanning segments follow: residues 304–326 (AYFT…SWLT) and 339–361 (MLYT…VLAN). Positions 369 and 370 each coordinate Mg(2+). Transmembrane regions (helical) follow at residues 376-398 (THFH…YYWS) and 415-437 (FWLI…INGM). His-377 lines the heme a3 pocket. His-379 contacts Fe(II)-heme a. Ca(2+) is bound at residue Pro-442. A helical transmembrane segment spans residues 452–474 (NLVSSFGSMMTIMSLMLFTYIIY).

The protein belongs to the heme-copper respiratory oxidase family. Component of the cytochrome c oxidase (complex IV, CIV), a multisubunit enzyme composed of a catalytic core of 3 subunits and several supernumerary subunits. The complex exists as a monomer or a dimer and forms supercomplexes (SCs) in the inner mitochondrial membrane with ubiquinol-cytochrome c oxidoreductase (cytochrome b-c1 complex, complex III, CIII). It depends on heme as a cofactor. Cu cation serves as cofactor.

It is found in the mitochondrion inner membrane. The catalysed reaction is 4 Fe(II)-[cytochrome c] + O2 + 8 H(+)(in) = 4 Fe(III)-[cytochrome c] + 2 H2O + 4 H(+)(out). It participates in energy metabolism; oxidative phosphorylation. Component of the cytochrome c oxidase, the last enzyme in the mitochondrial electron transport chain which drives oxidative phosphorylation. The respiratory chain contains 3 multisubunit complexes succinate dehydrogenase (complex II, CII), ubiquinol-cytochrome c oxidoreductase (cytochrome b-c1 complex, complex III, CIII) and cytochrome c oxidase (complex IV, CIV), that cooperate to transfer electrons derived from NADH and succinate to molecular oxygen, creating an electrochemical gradient over the inner membrane that drives transmembrane transport and the ATP synthase. Cytochrome c oxidase is the component of the respiratory chain that catalyzes the reduction of oxygen to water. Electrons originating from reduced cytochrome c in the intermembrane space (IMS) are transferred via the dinuclear copper A center (CU(A)) of subunit 2 and heme A of subunit 1 to the active site in subunit 1, a binuclear center (BNC) formed by heme A3 and copper B (CU(B)). The BNC reduces molecular oxygen to 2 water molecules using 4 electrons from cytochrome c in the IMS and 4 protons from the mitochondrial matrix. The sequence is that of Cytochrome c oxidase subunit 1 (COX1) from Eremothecium gossypii (strain ATCC 10895 / CBS 109.51 / FGSC 9923 / NRRL Y-1056) (Yeast).